A 259-amino-acid polypeptide reads, in one-letter code: Deoxyribose-phosphate aldolase (259 aa).

Asp102 functions as the Proton donor/acceptor in the catalytic mechanism. Residue Lys167 is the Schiff-base intermediate with acetaldehyde of the active site. Lys201 functions as the Proton donor/acceptor in the catalytic mechanism.

Belongs to the DeoC/FbaB aldolase family. DeoC type 2 subfamily.

The protein resides in the cytoplasm. The enzyme catalyses 2-deoxy-D-ribose 5-phosphate = D-glyceraldehyde 3-phosphate + acetaldehyde. Its pathway is carbohydrate degradation; 2-deoxy-D-ribose 1-phosphate degradation; D-glyceraldehyde 3-phosphate and acetaldehyde from 2-deoxy-alpha-D-ribose 1-phosphate: step 2/2. Catalyzes a reversible aldol reaction between acetaldehyde and D-glyceraldehyde 3-phosphate to generate 2-deoxy-D-ribose 5-phosphate. This is Deoxyribose-phosphate aldolase from Salmonella typhi.